The chain runs to 29 residues: Trypsin inhibitor 1 (29 aa).

Intrachain disulfides connect Cys-3–Cys-20, Cys-10–Cys-22, and Cys-16–Cys-28.

Belongs to the protease inhibitor I7 (squash-type serine protease inhibitor) family.

Its subcellular location is the secreted. Functionally, inhibits trypsin. This Momordica repens protein is Trypsin inhibitor 1.